The following is a 344-amino-acid chain: MTIEVRNLVKKFGSFAALDGVNLKVDNGELLALLGPSGSGKTTLLRIIAGLDWPDSGEVSFNGEDALAQGARERHVGFVFQHYALFRHMTVFENVAFGLRVQPRAVRKEEARIRARVKELLDLVQLDWLADRYPSQLSGGQRQRIALARALAIEPRILLLDEPFGALDAKVRKELRKWLRSLHHEINVTSIFVTHDQEEALEVANRVVVMDKGRIEQIGSPEDVYESPATAFVHGFIGESIELPVRIDDGVVRLGERPLRLAADGLAPGASRLFVRRHDMLVGPPGTGAFEGAVRHVRNFGPVQRAEVALFGGETIEIDAPRDRELRAGDRVGLEPRRYRIFAG.

The region spanning 3–237 (IEVRNLVKKF…PATAFVHGFI (235 aa)) is the ABC transporter domain. 35 to 42 (GPSGSGKT) contacts ATP.

This sequence belongs to the ABC transporter superfamily. Sulfate/tungstate importer (TC 3.A.1.6) family. The complex is composed of two ATP-binding proteins (CysA), two transmembrane proteins (CysT and CysW) and a solute-binding protein (CysP).

It is found in the cell inner membrane. The catalysed reaction is sulfate(out) + ATP + H2O = sulfate(in) + ADP + phosphate + H(+). It carries out the reaction thiosulfate(out) + ATP + H2O = thiosulfate(in) + ADP + phosphate + H(+). Functionally, part of the ABC transporter complex CysAWTP involved in sulfate/thiosulfate import. Responsible for energy coupling to the transport system. The polypeptide is Sulfate/thiosulfate import ATP-binding protein CysA (Bradyrhizobium diazoefficiens (strain JCM 10833 / BCRC 13528 / IAM 13628 / NBRC 14792 / USDA 110)).